A 454-amino-acid polypeptide reads, in one-letter code: CCA-adding enzyme (454 aa).

Residues Ser53 and Lys56 each contribute to the ATP site. CTP is bound by residues Ser53 and Lys56. Mg(2+)-binding residues include Asp65, Asp67, and Asp119. Residues His142, Lys161, and Tyr170 each coordinate ATP. Residues His142, Lys161, and Tyr170 each coordinate CTP.

Belongs to the tRNA nucleotidyltransferase/poly(A) polymerase family. Archaeal CCA-adding enzyme subfamily. Homodimer. Requires Mg(2+) as cofactor.

The enzyme catalyses a tRNA precursor + 2 CTP + ATP = a tRNA with a 3' CCA end + 3 diphosphate. The catalysed reaction is a tRNA with a 3' CCA end + 2 CTP + ATP = a tRNA with a 3' CCACCA end + 3 diphosphate. In terms of biological role, catalyzes the addition and repair of the essential 3'-terminal CCA sequence in tRNAs without using a nucleic acid template. Adds these three nucleotides in the order of C, C, and A to the tRNA nucleotide-73, using CTP and ATP as substrates and producing inorganic pyrophosphate. tRNA 3'-terminal CCA addition is required both for tRNA processing and repair. Also involved in tRNA surveillance by mediating tandem CCA addition to generate a CCACCA at the 3' terminus of unstable tRNAs. While stable tRNAs receive only 3'-terminal CCA, unstable tRNAs are marked with CCACCA and rapidly degraded. The chain is CCA-adding enzyme from Thermococcus gammatolerans (strain DSM 15229 / JCM 11827 / EJ3).